We begin with the raw amino-acid sequence, 193 residues long: ATP synthase subunit b 2 (193 aa).

The chain crosses the membrane as a helical span at residues 44-64 (IFWLVLTLLAIYFVLTKIALP).

The protein belongs to the ATPase B chain family. As to quaternary structure, F-type ATPases have 2 components, F(1) - the catalytic core - and F(0) - the membrane proton channel. F(1) has five subunits: alpha(3), beta(3), gamma(1), delta(1), epsilon(1). F(0) has three main subunits: a(1), b(2) and c(10-14). The alpha and beta chains form an alternating ring which encloses part of the gamma chain. F(1) is attached to F(0) by a central stalk formed by the gamma and epsilon chains, while a peripheral stalk is formed by the delta and b chains.

Its subcellular location is the cell inner membrane. In terms of biological role, f(1)F(0) ATP synthase produces ATP from ADP in the presence of a proton or sodium gradient. F-type ATPases consist of two structural domains, F(1) containing the extramembraneous catalytic core and F(0) containing the membrane proton channel, linked together by a central stalk and a peripheral stalk. During catalysis, ATP synthesis in the catalytic domain of F(1) is coupled via a rotary mechanism of the central stalk subunits to proton translocation. Component of the F(0) channel, it forms part of the peripheral stalk, linking F(1) to F(0). The b'-subunit is a diverged and duplicated form of b found in plants and photosynthetic bacteria. The sequence is that of ATP synthase subunit b 2 (atpF2) from Jannaschia sp. (strain CCS1).